Here is a 399-residue protein sequence, read N- to C-terminus: Coenzyme A biosynthesis bifunctional protein CoaBC (399 aa).

The tract at residues methionine 1–serine 190 is phosphopantothenoylcysteine decarboxylase. The active-site Proton donor is cysteine 159. Positions isoleucine 191–methionine 399 are phosphopantothenate--cysteine ligase. Residues aspartate 279, lysine 289, proline 307 to valine 310, phenylalanine 326, lysine 340, and lysine 344 contribute to the CTP site.

This sequence in the N-terminal section; belongs to the HFCD (homo-oligomeric flavin containing Cys decarboxylase) superfamily. The protein in the C-terminal section; belongs to the PPC synthetase family. Mg(2+) is required as a cofactor. It depends on FMN as a cofactor.

It catalyses the reaction N-[(R)-4-phosphopantothenoyl]-L-cysteine + H(+) = (R)-4'-phosphopantetheine + CO2. It carries out the reaction (R)-4'-phosphopantothenate + L-cysteine + CTP = N-[(R)-4-phosphopantothenoyl]-L-cysteine + CMP + diphosphate + H(+). It participates in cofactor biosynthesis; coenzyme A biosynthesis; CoA from (R)-pantothenate: step 2/5. The protein operates within cofactor biosynthesis; coenzyme A biosynthesis; CoA from (R)-pantothenate: step 3/5. Catalyzes two sequential steps in the biosynthesis of coenzyme A. In the first step cysteine is conjugated to 4'-phosphopantothenate to form 4-phosphopantothenoylcysteine. In the second step the latter compound is decarboxylated to form 4'-phosphopantotheine. This Vibrio parahaemolyticus serotype O3:K6 (strain RIMD 2210633) protein is Coenzyme A biosynthesis bifunctional protein CoaBC.